The sequence spans 545 residues: 4-coumarate--CoA ligase 1 (545 aa).

Residues serine 192, serine 193, glycine 194, threonine 195, threonine 196, and lysine 200 each coordinate ATP. Residues tyrosine 242 and serine 246 each coordinate (E)-4-coumaroyl-AMP. Lysine 263 contributes to the CoA binding site. Residues 265–334 (DIAQFLELIP…AKFPNAKLGQ (70 aa)) form an SBD1 region. Alanine 312, glutamine 334, glycine 335, threonine 339, and methionine 347 together coordinate (E)-4-coumaroyl-AMP. 3 residues coordinate ATP: glutamine 334, glycine 335, and threonine 339. The segment at 335-402 (GYGMTEAGPV…IRGDQIMKGY (68 aa)) is SBD2. Aspartate 423 and arginine 438 together coordinate ATP. Residues lysine 440 and lysine 444 each contribute to the (E)-4-coumaroyl-AMP site. Lysine 446 and glycine 447 together coordinate CoA. ATP is bound at residue lysine 529.

Belongs to the ATP-dependent AMP-binding enzyme family. Mg(2+) is required as a cofactor.

The enzyme catalyses (E)-4-coumarate + ATP + CoA = (E)-4-coumaroyl-CoA + AMP + diphosphate. The catalysed reaction is (E)-4-coumarate + ATP + H(+) = (E)-4-coumaroyl-AMP + diphosphate. It catalyses the reaction (E)-4-coumaroyl-AMP + CoA = (E)-4-coumaroyl-CoA + AMP + H(+). It functions in the pathway phytoalexin biosynthesis; 3,4',5-trihydroxystilbene biosynthesis; 3,4',5-trihydroxystilbene from trans-4-coumarate: step 1/2. Carboxylate--CoA ligase that may use 4-coumarate as substrate. Follows a two-step reaction mechanism, wherein the carboxylate substrate first undergoes adenylation by ATP, followed by a thioesterification in the presence of CoA to yield the final CoA thioester. This chain is 4-coumarate--CoA ligase 1 (4CL1), found in Solanum tuberosum (Potato).